The following is a 31-amino-acid chain: Hemocyanin subunit 2 (31 aa).

It belongs to the tyrosinase family. Hemocyanin subfamily. In terms of tissue distribution, hemolymph.

Its subcellular location is the secreted. The protein localises to the extracellular space. Functionally, hemocyanins are copper-containing oxygen carriers occurring freely dissolved in the hemolymph of many mollusks and arthropods. This Maja squinado (Mediterranean spider crab) protein is Hemocyanin subunit 2.